Here is a 159-residue protein sequence, read N- to C-terminus: UPF0262 protein Dshi_0980 (159 aa).

It belongs to the UPF0262 family.

This Dinoroseobacter shibae (strain DSM 16493 / NCIMB 14021 / DFL 12) protein is UPF0262 protein Dshi_0980.